The following is a 101-amino-acid chain: Putative membrane protein insertion efficiency factor (101 aa).

Belongs to the UPF0161 family.

It localises to the cell inner membrane. Its function is as follows. Could be involved in insertion of integral membrane proteins into the membrane. This is Putative membrane protein insertion efficiency factor from Methylobacterium sp. (strain 4-46).